Reading from the N-terminus, the 108-residue chain is Nitrite reductase (NADH) small subunit (108 aa).

In terms of assembly, associates with NirB.

The protein localises to the cytoplasm. The catalysed reaction is NH4(+) + 3 NAD(+) + 2 H2O = nitrite + 3 NADH + 5 H(+). Functionally, required for activity of the reductase. In Salmonella typhi, this protein is Nitrite reductase (NADH) small subunit (nirD).